A 150-amino-acid polypeptide reads, in one-letter code: UPF0178 protein Shewmr4_1560 (150 aa).

Belongs to the UPF0178 family.

This chain is UPF0178 protein Shewmr4_1560, found in Shewanella sp. (strain MR-4).